The primary structure comprises 208 residues: Thiamine-phosphate synthase (208 aa).

4-amino-2-methyl-5-(diphosphooxymethyl)pyrimidine-binding positions include 37-39 and Asn-70; that span reads QVR. Asp-71 and Asp-90 together coordinate Mg(2+). Thr-109 provides a ligand contact to 4-amino-2-methyl-5-(diphosphooxymethyl)pyrimidine. 135–137 provides a ligand contact to 2-[(2R,5Z)-2-carboxy-4-methylthiazol-5(2H)-ylidene]ethyl phosphate; that stretch reads TTS. Lys-138 contacts 4-amino-2-methyl-5-(diphosphooxymethyl)pyrimidine. Residue Ala-166 participates in 2-[(2R,5Z)-2-carboxy-4-methylthiazol-5(2H)-ylidene]ethyl phosphate binding.

The protein belongs to the thiamine-phosphate synthase family. It depends on Mg(2+) as a cofactor.

It catalyses the reaction 2-[(2R,5Z)-2-carboxy-4-methylthiazol-5(2H)-ylidene]ethyl phosphate + 4-amino-2-methyl-5-(diphosphooxymethyl)pyrimidine + 2 H(+) = thiamine phosphate + CO2 + diphosphate. The catalysed reaction is 2-(2-carboxy-4-methylthiazol-5-yl)ethyl phosphate + 4-amino-2-methyl-5-(diphosphooxymethyl)pyrimidine + 2 H(+) = thiamine phosphate + CO2 + diphosphate. The enzyme catalyses 4-methyl-5-(2-phosphooxyethyl)-thiazole + 4-amino-2-methyl-5-(diphosphooxymethyl)pyrimidine + H(+) = thiamine phosphate + diphosphate. The protein operates within cofactor biosynthesis; thiamine diphosphate biosynthesis; thiamine phosphate from 4-amino-2-methyl-5-diphosphomethylpyrimidine and 4-methyl-5-(2-phosphoethyl)-thiazole: step 1/1. In terms of biological role, condenses 4-methyl-5-(beta-hydroxyethyl)thiazole monophosphate (THZ-P) and 2-methyl-4-amino-5-hydroxymethyl pyrimidine pyrophosphate (HMP-PP) to form thiamine monophosphate (TMP). This Salinispora tropica (strain ATCC BAA-916 / DSM 44818 / JCM 13857 / NBRC 105044 / CNB-440) protein is Thiamine-phosphate synthase.